The primary structure comprises 210 residues: Orotate phosphoribosyltransferase (210 aa).

5-phospho-alpha-D-ribose 1-diphosphate is bound by residues arginine 94, lysine 98, histidine 100, and 120 to 128; that span reads EDLISTGGS. An orotate-binding site is contributed by serine 124.

The protein belongs to the purine/pyrimidine phosphoribosyltransferase family. PyrE subfamily. Homodimer. Mg(2+) serves as cofactor.

The catalysed reaction is orotidine 5'-phosphate + diphosphate = orotate + 5-phospho-alpha-D-ribose 1-diphosphate. The protein operates within pyrimidine metabolism; UMP biosynthesis via de novo pathway; UMP from orotate: step 1/2. Functionally, catalyzes the transfer of a ribosyl phosphate group from 5-phosphoribose 1-diphosphate to orotate, leading to the formation of orotidine monophosphate (OMP). The protein is Orotate phosphoribosyltransferase of Halalkalibacterium halodurans (strain ATCC BAA-125 / DSM 18197 / FERM 7344 / JCM 9153 / C-125) (Bacillus halodurans).